Reading from the N-terminus, the 423-residue chain is Protein phosphatase 2C 77 (423 aa).

The segment at glycine 74 to valine 95 is disordered. The region spanning leucine 112–leucine 411 is the PPM-type phosphatase domain. 3 residues coordinate Mg(2+): aspartate 165, aspartate 251, and serine 252. Cysteines 257 and 331 form a disulfide. Positions 337 and 402 each coordinate Mg(2+).

The protein belongs to the PP2C family. As to quaternary structure, interacts with SPK1, CIPK15/PKS3, GPX3, SCAR1, SCAR2, SCAR3 and SCARL. Also interacts with CIPK24/SOS2. Binds to the fibrillin precursor protein. Interacts with ABA-bounded PYR1, PYL1, PYL2, PYL3, PYL4, PYL5, PYL6, PYL8 and PYL9, and with free PYL2, PYL3 and PYL4. Interacts with and represses GHR1, and, to a lesser extent, SRK2E/OST1. Requires Mg(2+) as cofactor. The cofactor is Mn(2+).

The enzyme catalyses O-phospho-L-seryl-[protein] + H2O = L-seryl-[protein] + phosphate. It catalyses the reaction O-phospho-L-threonyl-[protein] + H2O = L-threonyl-[protein] + phosphate. Its activity is regulated as follows. Phosphatase activity repressed by oxidized ATGPX3, free fatty acids (e.g. arachidonic acid (20:4) and Linolenic acid (18:3)) and by H(2)O(2). Repressed by PYR/PYL/RCAR ABA receptors in an ABA-dependent manner. Its function is as follows. Repressor of the abscisic acid (ABA) signaling pathway that regulates numerous ABA responses, such as stomatal closure, osmotic water permeability of the plasma membrane (Pos), high light stress, response to glucose, seed germination and inhibition of vegetative growth. During the stomatal closure regulation, modulates the inward calcium-channel permeability as well as H(2)O(2) and oxidative burst in response to ABA and dehydration. Represses GHR1 and, to some extent, SRK2E/OST1, kinases involved in the regulation of SLAC1-dependent stomatal closure. Controls negatively fibrillin that is involved in mediating ABA-induced photoprotection. May be implicated in ABA content regulation. Involved in acquired thermotolerance of root growth and seedling survival. Required for the Erwinia amylovora harpin-induced (HrpN) drought tolerance. Involved in the hydrotropic response. The polypeptide is Protein phosphatase 2C 77 (Arabidopsis thaliana (Mouse-ear cress)).